The primary structure comprises 299 residues: DNA repair protein RecO (299 aa).

Residues 1–62 (MTLNSDADPD…GRRAPRTPAS (62 aa)) are disordered. Residues 25 to 41 (ASKPARSTRKSSSAKSA) are compositionally biased toward low complexity.

It belongs to the RecO family.

Involved in DNA repair and RecF pathway recombination. The polypeptide is DNA repair protein RecO (Paraburkholderia xenovorans (strain LB400)).